Consider the following 106-residue polypeptide: uncharacterized protein (106 aa).

Disordered stretches follow at residues 27–47 (FSDS…DVSD) and 83–106 (SPAM…VQSK). The span at 29–39 (DSEDEPDDEAS) shows a compositional bias: acidic residues. Basic and acidic residues predominate over residues 94-106 (GIEREDRGGVQSK).

It is found in the mitochondrion. This is an uncharacterized protein from Arabidopsis thaliana (Mouse-ear cress).